A 229-amino-acid chain; its full sequence is MSLLAQLDQKIAANGGLIVSCQPVPDSPLDKPEIVAAMALAAEQAGAVAIRIEGVANLQATRAVVSVPIIGIVKRDLEDSPVRITAYIEDVDALAQAGADIIAIDGTDRPRPVPVETLLARIHHHGLLAMTDCSTPEDGLACQKLGAEIIGTTLSGYTTPETPEEPDLALVKTLSDAGCRVIAEGRYNTPAQAADAMRHGAWAVTVGSAITRLEHICQWYNTAMKKAVL.

It belongs to the NanE family.

It catalyses the reaction an N-acyl-D-glucosamine 6-phosphate = an N-acyl-D-mannosamine 6-phosphate. The protein operates within amino-sugar metabolism; N-acetylneuraminate degradation; D-fructose 6-phosphate from N-acetylneuraminate: step 3/5. Its function is as follows. Converts N-acetylmannosamine-6-phosphate (ManNAc-6-P) to N-acetylglucosamine-6-phosphate (GlcNAc-6-P). The protein is Putative N-acetylmannosamine-6-phosphate 2-epimerase of Escherichia coli O8 (strain IAI1).